Reading from the N-terminus, the 549-residue chain is Mitochondrial hydroperoxide bicyclase CYP50918A1 (549 aa).

The disordered stretch occupies residues 1-75 (MPDAFDVSDD…PQGNRKPAVL (75 aa)). The segment covering 8-26 (SDDKQLVDQQLTRDSDSKP) has biased composition (basic and acidic residues). Positions 27–41 (AAKPASKQKPPSKVP) are enriched in low complexity. Cysteine 491 is a heme binding site. Residues 528–549 (DTGDHGPPNGKFSVIKPRQPKH) are disordered.

This sequence belongs to the cytochrome P450 family. Requires heme as cofactor.

It is found in the mitochondrion. It catalyses the reaction (13S)-hydroperoxy-(9Z,11E,15Z)-octadecatrienoate = plasmodiophorol A. It carries out the reaction (13S)-hydroperoxy-(9Z,11E,15Z)-octadecatrienoate = plasmodiophorol B. The protein operates within lipid metabolism; oxylipin biosynthesis. Cytochrome P450 hydroperoxide bicyclase involved in the metabolism of oxylipins natural products such as egregiachlorides, hybridalactone, ecklonialactones and related bicyclic oxylipins. Isomerizes the hydroperoxides into epoxyalcohols via epoxyallylic radical. Can use alpha-linolenic 13-hydroperoxide ((9Z,11E,13S,15Z)-13-hydroperoxy-9,11,15-octadecatrienoic, 13-HPOT) as preferred substrate to produce the heterobicyclic oxylipins plasmodiophorol A (6-oxabicyclo[3.1.0]hexane) and plasmodiophorol B (2-oxabicyclo[2.2.1]heptane) at the ratio 12:1 and a minor product plasmodiophorol C (cyclopentanediol) formed through the hydrolysis of plasmodiophorols A and B and, to a lower extent, active with linoleic acid 13-hydroperoxide ((9Z,11E,13S)-13-hydroperoxy-9,11-octadecadienoic, 13-HPOD), linoleic acid 9-hydroperoxide ((9S,10E,12Z)-9-hydroperoxy-10,12-octadecadienoic, 9-HPOD) and alpha-linolenic 9-hydroperoxide ((9S,10E,12Z,15Z)-9-hydroperoxy-10,12,15-octadecatrienoic, 9-HPOT). The protein is Mitochondrial hydroperoxide bicyclase CYP50918A1 of Plasmodiophora brassicae (Clubroot disease agent).